The sequence spans 298 residues: N-acetylmuramic acid 6-phosphate etherase (298 aa).

The region spanning 55–218 (IHAQVSGGGR…STGLMIKSGK (164 aa)) is the SIS domain. Glu83 functions as the Proton donor in the catalytic mechanism. Glu114 is an active-site residue.

It belongs to the GCKR-like family. MurNAc-6-P etherase subfamily. As to quaternary structure, homodimer.

It carries out the reaction N-acetyl-D-muramate 6-phosphate + H2O = N-acetyl-D-glucosamine 6-phosphate + (R)-lactate. It functions in the pathway amino-sugar metabolism; 1,6-anhydro-N-acetylmuramate degradation. It participates in amino-sugar metabolism; N-acetylmuramate degradation. Its pathway is cell wall biogenesis; peptidoglycan recycling. Specifically catalyzes the cleavage of the D-lactyl ether substituent of MurNAc 6-phosphate, producing GlcNAc 6-phosphate and D-lactate. Together with AnmK, is also required for the utilization of anhydro-N-acetylmuramic acid (anhMurNAc) either imported from the medium or derived from its own cell wall murein, and thus plays a role in cell wall recycling. This Escherichia coli (strain SMS-3-5 / SECEC) protein is N-acetylmuramic acid 6-phosphate etherase.